The chain runs to 510 residues: ATP synthase subunit alpha (510 aa).

Position 170–177 (170–177) interacts with ATP; that stretch reads GDRQTGKT.

The protein belongs to the ATPase alpha/beta chains family. As to quaternary structure, F-type ATPases have 2 components, CF(1) - the catalytic core - and CF(0) - the membrane proton channel. CF(1) has five subunits: alpha(3), beta(3), gamma(1), delta(1), epsilon(1). CF(0) has three main subunits: a(1), b(2) and c(9-12). The alpha and beta chains form an alternating ring which encloses part of the gamma chain. CF(1) is attached to CF(0) by a central stalk formed by the gamma and epsilon chains, while a peripheral stalk is formed by the delta and b chains.

Its subcellular location is the cell inner membrane. It catalyses the reaction ATP + H2O + 4 H(+)(in) = ADP + phosphate + 5 H(+)(out). In terms of biological role, produces ATP from ADP in the presence of a proton gradient across the membrane. The alpha chain is a regulatory subunit. This is ATP synthase subunit alpha from Maricaulis maris (strain MCS10) (Caulobacter maris).